The chain runs to 438 residues: DNA polymerase IV 1 (438 aa).

Residues 46–226 (LAHIDCDAFY…KPVTMIWGVG (181 aa)) form the UmuC domain. 2 residues coordinate Mg(2+): Asp-50 and Asp-143. Glu-144 is a catalytic residue.

It belongs to the DNA polymerase type-Y family. As to quaternary structure, monomer. Mg(2+) is required as a cofactor.

It localises to the cytoplasm. The enzyme catalyses DNA(n) + a 2'-deoxyribonucleoside 5'-triphosphate = DNA(n+1) + diphosphate. Functionally, poorly processive, error-prone DNA polymerase involved in untargeted mutagenesis. Copies undamaged DNA at stalled replication forks, which arise in vivo from mismatched or misaligned primer ends. These misaligned primers can be extended by PolIV. Exhibits no 3'-5' exonuclease (proofreading) activity. May be involved in translesional synthesis, in conjunction with the beta clamp from PolIII. In Mesorhizobium japonicum (strain LMG 29417 / CECT 9101 / MAFF 303099) (Mesorhizobium loti (strain MAFF 303099)), this protein is DNA polymerase IV 1 (dinB1).